A 698-amino-acid polypeptide reads, in one-letter code: Glycine--tRNA ligase beta subunit (698 aa).

The protein belongs to the class-II aminoacyl-tRNA synthetase family. As to quaternary structure, tetramer of two alpha and two beta subunits.

Its subcellular location is the cytoplasm. It carries out the reaction tRNA(Gly) + glycine + ATP = glycyl-tRNA(Gly) + AMP + diphosphate. The polypeptide is Glycine--tRNA ligase beta subunit (Xanthomonas campestris pv. campestris (strain B100)).